The primary structure comprises 329 residues: Ribosome biogenesis regulatory protein homolog (329 aa).

Disordered stretches follow at residues 227-248 (KANI…VSAE) and 262-329 (KKAK…NKRK). Positions 278-295 (LREKKEKQEKKGAKEATR) are enriched in basic and acidic residues. The segment covering 320 to 329 (AKKKGANKRK) has biased composition (basic residues).

It belongs to the RRS1 family.

The protein localises to the nucleus. Its subcellular location is the nucleolus. Involved in ribosomal large subunit assembly. The polypeptide is Ribosome biogenesis regulatory protein homolog (Caenorhabditis briggsae).